The primary structure comprises 527 residues: Monooxygenase aurF (527 aa).

An N-terminal signal peptide occupies residues 1–19; that stretch reads MPNPTVAIVGLGALGLVTL. An N-linked (GlcNAc...) asparagine glycan is attached at asparagine 59.

Belongs to the FMO family. Might be part of an extracellular enzyme complex composed of GIP1, aurF, aurO and aurS. Requires FAD as cofactor.

The protein resides in the secreted. The protein localises to the extracellular space. The protein operates within pigment biosynthesis. In terms of biological role, monooxygenase; part of the gene cluster that mediates the biosynthesis of aurofusarin, a red mycelium pigment which is acting as a mycotoxin. The first step is performed by the polyketide synthase which condenses one acetyl-CoA and 6 malonyl-CoA units to form the first intermediate, the cyclic heptaketide and yellow pigment YWA1. The C2 hydroxyl group in the pyrone ring of YWA1 is probably formed during ring closure by an aldol-type cyclization reaction. The dehydratase aurZ then acts as the first tailoring enzyme in the aurofusarin biosynthetic pathway by converting YWA1 to nor-rubrofusarin. Nor-rubrofusarin is then methylated to rubrofusarin by the O-methyltransferase aurJ. Rubrofusarin is then transported across the plasma membrane by the rubrofusarin-specific pump aurT for further enzymatic processing by the extracellular complex composed of GIP1, aurF, aurO and aurS to yield aurofusarin. The protein is Monooxygenase aurF of Gibberella zeae (strain ATCC MYA-4620 / CBS 123657 / FGSC 9075 / NRRL 31084 / PH-1) (Wheat head blight fungus).